The chain runs to 215 residues: N-(5'-phosphoribosyl)anthranilate isomerase (215 aa).

It belongs to the TrpF family.

It carries out the reaction N-(5-phospho-beta-D-ribosyl)anthranilate = 1-(2-carboxyphenylamino)-1-deoxy-D-ribulose 5-phosphate. Its pathway is amino-acid biosynthesis; L-tryptophan biosynthesis; L-tryptophan from chorismate: step 3/5. The chain is N-(5'-phosphoribosyl)anthranilate isomerase from Paramagnetospirillum magneticum (strain ATCC 700264 / AMB-1) (Magnetospirillum magneticum).